We begin with the raw amino-acid sequence, 101 residues long: Large ribosomal subunit protein uL23 (101 aa).

The protein belongs to the universal ribosomal protein uL23 family. As to quaternary structure, part of the 50S ribosomal subunit. Contacts protein L29, and trigger factor when it is bound to the ribosome.

In terms of biological role, one of the early assembly proteins it binds 23S rRNA. One of the proteins that surrounds the polypeptide exit tunnel on the outside of the ribosome. Forms the main docking site for trigger factor binding to the ribosome. This is Large ribosomal subunit protein uL23 from Corynebacterium glutamicum (strain R).